The primary structure comprises 360 residues: DNA replication and repair protein RecF (360 aa).

33–40 lines the ATP pocket; the sequence is GENGSGKT.

Belongs to the RecF family.

Its subcellular location is the cytoplasm. Its function is as follows. The RecF protein is involved in DNA metabolism; it is required for DNA replication and normal SOS inducibility. RecF binds preferentially to single-stranded, linear DNA. It also seems to bind ATP. In Rickettsia rickettsii (strain Iowa), this protein is DNA replication and repair protein RecF.